The primary structure comprises 90 residues: MSNSEGWXSFXQTLSGLPQWASADCVAGPLVSAGITDINIEDDQGIHVRLIVRDAEGRMVWRAWNFEPDAGEGFNRYIHRSGIRTDTFPR.

This sequence belongs to the UPF0401 family.

The protein is Putative UPF0401 protein YpjI (ypjI) of Escherichia coli (strain K12).